The primary structure comprises 1325 residues: MLGWVQRVLPQPPGTPQKTVETAGPQPETESKPEANPQPEPEPQQEPEPEPEPEPEPEPEPEPEPEPEPEPEPEPVPEEAPPEVQALPPEEPMEGEGEAEAGPSLQETQVADPAQPTSQAQVAVAKVNRPSSWMLSWFWRGMQKVVPQPVCSNGGQNLAAGERDPDQGGAQIPEPCGTGDPGSAEASGTQDTEPSLWLLRWLEQNLEKVLPQPPPPSLAWKVEPEAAVLDPDPPGTPMQMEPTESPSQPNPGPLEPEEEPAAEPQPGFQSSSLPPPGDPVRLIEWLLHRLEMALPQPVLHGKAAEQEPGCPGMCDVQTISILPVEQVEHDLVLEEVDSCWEDAQQEDGASPQETEVAPAHEEESEAIVEIPRELTKIQEEREDEQEEDEEEKEEEKKKGEEEKEKEEEEKEKEKEKEEEKEEEEKEEEEEEEKEEEEEEKEEEEKEEEEKEEEEEEEEEEEEPIVLLDSCLVVQADVDECQLERTPSELASIQELPEEKEEKEEEKEEEKEEEEEKKEEEVEKKEEGEATNSTVPATKEHPELQVEDTDADSGPLIPEETLPPPERPPPSPVKSDTLTVPGAAAAGHRKKLPSQDDEAEELKALSPAESPVVAWSDPTTPQEADGQDRAASTASQNSAIINDRLQELVKMFKERTEKVKEKLIDPDVTSDEESPKPSPAKKAPEPDPAQKPAEAEVAEEEHYCDMLCCKFKRRPLKMYRFPQSIDPLTNLMYILWLFFVVLAWNWNCWLIPVRWAFPYQRADNIHFWLLMDYLCDFIYLLDITVFQMRLQFVKGGDIITDKKEMRNNYLKSRRFKMDLLCLLPLDFLYLKLGINPLLRLPRCLKYMAFFEFNNRLEAILSKAYVYRVIRTTAYLLYSLHLNSCLYYWASAFQGIGSTHWVYDGVGNSYIRCYYWAVKTLITIGGLPDPQTLFEIVFQLLNYFTGVFAFSVMIGQMRDVVGAATAGQTYYRSCMDSTVKYMNFYKIPRSVQNRVKTWYEYTWHSQGMLDESELMVQLPDKMRLDLAIDVNYSIVSKVALFQGCDRQMIFDMLKRLRSVVYLPNDYVCKKGEIGREMYIIQAGQVQVLGGPDGKAVLVTLKAGSVFGEISLLAVGGGNRRTANVVAHGFTNLFILDKKDLNEILVHYPESQKLLRKKARRMLRNNNKPKEEKSVLILPPRAGTPKLFNAALAAAGKMGPRGAKGGKLAHLRARLKELAALEAAARQQQLLEQAKSSQEAGGEEGSGATDQPAPQEPPEPKDPPKPPGPPEPSAQSSPPPASAKPEESTGEAAGPPEPSVRIRVSPGPDPGEQTLSVEVLEEKKEGAE.

Disordered regions lie at residues 1–124 (MLGW…QVAV), 147–198 (PQPV…SLWL), 227–279 (AVLD…PGDP), 340–470 (WEDA…LDSC), 482–637 (LERT…SQNS), and 659–694 (KEKLIDPDVTSDEESPKPSPAKKAPEPDPAQKPAEA). Residues 1–732 (MLGWVQRVLP…SIDPLTNLMY (732 aa)) lie on the Cytoplasmic side of the membrane. The span at 43–81 (PQQEPEPEPEPEPEPEPEPEPEPEPEPEPEPEPVPEEAP) shows a compositional bias: acidic residues. A compositionally biased stretch (polar residues) spans 105–121 (LQETQVADPAQPTSQAQ). Residues 370-379 (IPRELTKIQE) show a composition bias toward basic and acidic residues. 3 stretches are compositionally biased toward acidic residues: residues 380-393 (EREDEQEEDEEEKE), 418-463 (EEKE…EEEP), and 495-517 (LPEEKEEKEEEKEEEKEEEEEKK). Residues 518–527 (EEEVEKKEEG) show a composition bias toward basic and acidic residues. Residues 560–571 (TLPPPERPPPSP) show a composition bias toward pro residues. The tract at residues 633-643 (ASQNSAIINDR) is calmodulin-binding CaM1. Residues 733-754 (ILWLFFVVLAWNWNCWLIPVRW) traverse the membrane as a helical segment. Residues 755-763 (AFPYQRADN) are Extracellular-facing. A helical membrane pass occupies residues 764 to 785 (IHFWLLMDYLCDFIYLLDITVF). Topologically, residues 786–800 (QMRLQFVKGGDIITD) are cytoplasmic. The helical transmembrane segment at 801-820 (KKEMRNNYLKSRRFKMDLLC) threads the bilayer. Topologically, residues 821–836 (LLPLDFLYLKLGINPL) are extracellular. A helical membrane pass occupies residues 837–849 (LRLPRCLKYMAFF). Residues 850–861 (EFNNRLEAILSK) are Cytoplasmic-facing. The chain crosses the membrane as a helical span at residues 862–884 (AYVYRVIRTTAYLLYSLHLNSCL). The tract at residues 862–961 (AYVYRVIRTT…IGQMRDVVGA (100 aa)) is ion conduction pathway. Topologically, residues 885–907 (YYWASAFQGIGSTHWVYDGVGNS) are extracellular. The next 2 helical transmembrane spans lie at 908-934 (YIRCYYWAVKTLITIGGLPDPQTLFEI) and 935-960 (VFQLLNYFTGVFAFSVMIGQMRDVVG). Residues 961–1325 (AATAGQTYYR…VLEEKKEGAE (365 aa)) are Cytoplasmic-facing. The interval 964–1040 (AGQTYYRSCM…SIVSKVALFQ (77 aa)) is C-linker. A cNMP-binding domain region spans residues 1038–1142 (LFQGCDRQMI…LDKKDLNEIL (105 aa)). The segment at 1044-1160 (RQMIFDMLKR…LLRKKARRML (117 aa)) is cyclic nucleotide-binding domain. Residues Gly-1105, Glu-1106, Ser-1108, Arg-1118, and Thr-1119 each coordinate 3',5'-cyclic GMP. Arg-1118 is a binding site for 3',5'-cyclic AMP. Positions 1224 to 1230 (QQQLLEQ) are calmodulin-binding CaM2. The segment covering 1226–1250 (QLLEQAKSSQEAGGEEGSGATDQPA) has biased composition (low complexity). The interval 1226-1325 (QLLEQAKSSQ…VLEEKKEGAE (100 aa)) is disordered. Residues 1262–1279 (KPPGPPEPSAQSSPPPAS) are compositionally biased toward pro residues.

The protein belongs to the cyclic nucleotide-gated cation channel (TC 1.A.1.5) family. CNGB1 subfamily. As to expression, rod outer segments. Olfactory sensory neurons.

Its subcellular location is the cell projection. It localises to the cilium membrane. The catalysed reaction is Ca(2+)(in) = Ca(2+)(out). It carries out the reaction Na(+)(in) = Na(+)(out). The enzyme catalyses K(+)(in) = K(+)(out). It catalyses the reaction NH4(+)(in) = NH4(+)(out). The catalysed reaction is Rb(+)(in) = Rb(+)(out). It carries out the reaction Li(+)(in) = Li(+)(out). The enzyme catalyses Cs(+)(in) = Cs(+)(out). Its function is as follows. Pore-forming subunit of the rod cyclic nucleotide-gated channel. Mediates rod photoresponses at dim light converting transient changes in intracellular cGMP levels into electrical signals. In the dark, cGMP levels are high and keep the channel open enabling a steady inward current carried by Na(+) and Ca(2+) ions that leads to membrane depolarization and neurotransmitter release from synaptic terminals. Upon photon absorption cGMP levels decline leading to channel closure and membrane hyperpolarization that ultimately slows neurotransmitter release and signals the presence of light, the end point of the phototransduction cascade. Pore-forming subunit of the olfactory cyclic nucleotide-gated channel. Operates in the cilia of olfactory sensory neurons where chemical stimulation of the odorant is converted to an electrical signal. Mediates odorant-induced cAMP-dependent Ca(2+) influx triggering neuron depolarization. The rise of intracellular Ca(2+) levels potentiates the olfactory response by activating Ca(2+)-dependent Cl(-) channels, but it also serves as a negative feedback signal to desensitize the channel for rapid adaptation to odorants. Conducts cGMP- and cAMP-gated ion currents, with permeability for monovalent and divalent cations. The selectivity for Ca(2+) over Na(+) increases with cGMP concentrations, whereas the selectivity among monovalent ions is independent of the cGMP levels. This Mus musculus (Mouse) protein is Cyclic nucleotide-gated channel beta-1.